We begin with the raw amino-acid sequence, 238 residues long: tRNA (guanine-N(1)-)-methyltransferase (238 aa).

S-adenosyl-L-methionine-binding positions include Gly-112 and 131–136 (LGDFIL).

It belongs to the RNA methyltransferase TrmD family. Homodimer.

The protein resides in the cytoplasm. The enzyme catalyses guanosine(37) in tRNA + S-adenosyl-L-methionine = N(1)-methylguanosine(37) in tRNA + S-adenosyl-L-homocysteine + H(+). In terms of biological role, specifically methylates guanosine-37 in various tRNAs. This is tRNA (guanine-N(1)-)-methyltransferase from Nostoc punctiforme (strain ATCC 29133 / PCC 73102).